Here is a 129-residue protein sequence, read N- to C-terminus: CD59B glycoprotein (129 aa).

An N-terminal signal peptide occupies residues 1–23 (MRAQRGLILLLLLLAVFCSTAVS). The region spanning 24–107 (LKCYNCLDPV…GLEEPNNAET (84 aa)) is the UPAR/Ly6 domain. 5 disulfides stabilise this stretch: cysteine 26–cysteine 49, cysteine 29–cysteine 36, cysteine 42–cysteine 62, cysteine 68–cysteine 86, and cysteine 87–cysteine 92. Asparagine 39 carries an N-linked (GlcNAc...) asparagine glycan. Asparagine 104 carries the GPI-anchor amidated asparagine lipid modification. A propeptide spans 105–129 (AETSSLRKTALLGTSVLVAILKFCF) (removed in mature form).

In terms of assembly, interacts with T-cell surface antigen CD2. Post-translationally, N- and O-glycosylated. In terms of tissue distribution, widely expressed in the kidneys, brain, lungs, spleen and testis Testis-specific.

Its subcellular location is the cell membrane. The protein resides in the secreted. Functionally, potent inhibitor of the complement membrane attack complex (MAC) action, which protects self-cells from damage during complement activation. Acts by binding to the beta-haipins of C8 (C8A and C8B) components of the assembling MAC, forming an intermolecular beta-sheet that prevents incorporation of the multiple copies of C9 required for complete formation of the osmolytic pore. This is CD59B glycoprotein from Mus musculus (Mouse).